The following is a 202-amino-acid chain: Small ribosomal subunit protein uS4 (202 aa).

The disordered stretch occupies residues T22–S43. The region spanning M90–N152 is the S4 RNA-binding domain.

The protein belongs to the universal ribosomal protein uS4 family. As to quaternary structure, part of the 30S ribosomal subunit. Contacts protein S5. The interaction surface between S4 and S5 is involved in control of translational fidelity.

Functionally, one of the primary rRNA binding proteins, it binds directly to 16S rRNA where it nucleates assembly of the body of the 30S subunit. In terms of biological role, with S5 and S12 plays an important role in translational accuracy. This chain is Small ribosomal subunit protein uS4, found in Nostoc punctiforme (strain ATCC 29133 / PCC 73102).